A 196-amino-acid polypeptide reads, in one-letter code: ATP-dependent Clp protease proteolytic subunit (196 aa).

S98 acts as the Nucleophile in catalysis. The active site involves H123.

This sequence belongs to the peptidase S14 family. As to quaternary structure, fourteen ClpP subunits assemble into 2 heptameric rings which stack back to back to give a disk-like structure with a central cavity, resembling the structure of eukaryotic proteasomes.

The protein localises to the cytoplasm. The enzyme catalyses Hydrolysis of proteins to small peptides in the presence of ATP and magnesium. alpha-casein is the usual test substrate. In the absence of ATP, only oligopeptides shorter than five residues are hydrolyzed (such as succinyl-Leu-Tyr-|-NHMec, and Leu-Tyr-Leu-|-Tyr-Trp, in which cleavage of the -Tyr-|-Leu- and -Tyr-|-Trp bonds also occurs).. In terms of biological role, cleaves peptides in various proteins in a process that requires ATP hydrolysis. Has a chymotrypsin-like activity. Plays a major role in the degradation of misfolded proteins. The chain is ATP-dependent Clp protease proteolytic subunit from Acidobacterium capsulatum (strain ATCC 51196 / DSM 11244 / BCRC 80197 / JCM 7670 / NBRC 15755 / NCIMB 13165 / 161).